A 993-amino-acid polypeptide reads, in one-letter code: UPF0182 protein ROP_64500 (993 aa).

7 helical membrane-spanning segments follow: residues V18–S38, L63–L83, L114–S134, W174–G194, V211–D231, K260–L280, and M288–V308. Positions T904–V948 are disordered. The span at A908–P926 shows a compositional bias: low complexity. Residues P933 to P942 are compositionally biased toward pro residues.

Belongs to the UPF0182 family.

Its subcellular location is the cell membrane. The polypeptide is UPF0182 protein ROP_64500 (Rhodococcus opacus (strain B4)).